A 434-amino-acid chain; its full sequence is MGDNHGDDKNIEIWKIKKLIKSLEAARGNGTSMISLIMPPRDQVSRVTKMLGDEYGTASNIKSRVNRQSVLGAITSAQQRLKLYNRVPPNGLVLYTGTIVNDEGKEKKVTIDFEPFKPINNTLYLCDNKFHTEALNELLESDDKFGFIVMDGNGTLFGTLSGNTREVLHKFSVDLPKKHGRGGQSALRFARLRMEKRHNYVRKTAELATQYYINPATSQPNVSGLILAGSADFKTELSQSDMFDPRLAAKILNVVDVSYGGENGFNQAIELSSEILANVKFIQEKRLIGKYFEEISQDTGKYVFGVEDTLNALDSGAVETLIVWENLDINRYVLKNSTTGETVIKHLNKEQEANTENFKVDNNDLDVEDKMSLLEWLANECKRFGCALEFVTNKSQEGSQFCRGFGGVGGILRYQLDMTAFDEDLDVYDDDESE.

This sequence belongs to the eukaryotic release factor 1 family. In terms of assembly, heterodimer of two subunits, one of which binds GTP.

Its subcellular location is the cytoplasm. Directs the termination of nascent peptide synthesis (translation) in response to the termination codons UAA, UAG and UGA. Modulates plant growth and development. The protein is Eukaryotic peptide chain release factor subunit 1-1 of Brassica oleracea var. botrytis (Cauliflower).